We begin with the raw amino-acid sequence, 286 residues long: Probable transport system permease protein NifC (286 aa).

Helical transmembrane passes span 34–54, 75–95, 114–134, 152–172, 216–236, and 257–277; these read LFLA…ISMI, IILS…IGTP, IFVE…LLLA, VIFT…ALYV, GLIL…MFAG, and IKMA…LLLL. The ABC transmembrane type-1 domain occupies 75 to 278; it reads IILSFVTSLI…IMTFVLLLLV (204 aa).

Belongs to the binding-protein-dependent transport system permease family. CysTW subfamily.

It localises to the cell membrane. Its function is as follows. May be involved in molybdenum transport. In Clostridium pasteurianum, this protein is Probable transport system permease protein NifC (nifC).